Here is a 475-residue protein sequence, read N- to C-terminus: Aspartyl/glutamyl-tRNA(Asn/Gln) amidotransferase subunit B (475 aa).

This sequence belongs to the GatB/GatE family. GatB subfamily. In terms of assembly, heterotrimer of A, B and C subunits.

The catalysed reaction is L-glutamyl-tRNA(Gln) + L-glutamine + ATP + H2O = L-glutaminyl-tRNA(Gln) + L-glutamate + ADP + phosphate + H(+). It catalyses the reaction L-aspartyl-tRNA(Asn) + L-glutamine + ATP + H2O = L-asparaginyl-tRNA(Asn) + L-glutamate + ADP + phosphate + 2 H(+). In terms of biological role, allows the formation of correctly charged Asn-tRNA(Asn) or Gln-tRNA(Gln) through the transamidation of misacylated Asp-tRNA(Asn) or Glu-tRNA(Gln) in organisms which lack either or both of asparaginyl-tRNA or glutaminyl-tRNA synthetases. The reaction takes place in the presence of glutamine and ATP through an activated phospho-Asp-tRNA(Asn) or phospho-Glu-tRNA(Gln). In Caldanaerobacter subterraneus subsp. tengcongensis (strain DSM 15242 / JCM 11007 / NBRC 100824 / MB4) (Thermoanaerobacter tengcongensis), this protein is Aspartyl/glutamyl-tRNA(Asn/Gln) amidotransferase subunit B.